The sequence spans 460 residues: Glutamate--tRNA ligase 2 (460 aa).

A 'HIGH' region motif is present at residues Pro8 to Gly18. The short motif at Lys237–Arg241 is the 'KMSKS' region element. An ATP-binding site is contributed by Lys240.

Belongs to the class-I aminoacyl-tRNA synthetase family. Glutamate--tRNA ligase type 1 subfamily. As to quaternary structure, monomer.

It is found in the cytoplasm. It carries out the reaction tRNA(Glu) + L-glutamate + ATP = L-glutamyl-tRNA(Glu) + AMP + diphosphate. Catalyzes the attachment of glutamate to tRNA(Glu) in a two-step reaction: glutamate is first activated by ATP to form Glu-AMP and then transferred to the acceptor end of tRNA(Glu). The sequence is that of Glutamate--tRNA ligase 2 from Campylobacter fetus subsp. fetus (strain 82-40).